A 316-amino-acid polypeptide reads, in one-letter code: F-box protein At4g09920 (316 aa).

The F-box domain maps to 1–47 (MDRIIGLPDEVLVKILSFVPTKVAVSTSILSKRWEFLWMWLTKLKFG).

This Arabidopsis thaliana (Mouse-ear cress) protein is F-box protein At4g09920.